Consider the following 1300-residue polypeptide: Insulin receptor-related protein (1300 aa).

The first 26 residues, 1–26 (MAVPALWPWGVHLLMSLLSLGSGLDT), serve as a signal peptide directing secretion. 2 N-linked (GlcNAc...) asparagine glycosylation sites follow: Asn-47 and Asn-100. Intrachain disulfides connect Cys-214-Cys-222, Cys-216-Cys-228, Cys-229-Cys-237, Cys-233-Cys-246, Cys-249-Cys-258, Cys-262-Cys-274, Cys-280-Cys-300, Cys-304-Cys-317, and Cys-320-Cys-324. Asn-311 carries N-linked (GlcNAc...) asparagine glycosylation. Asn-411, Asn-492, Asn-528, Asn-616, Asn-634, Asn-756, Asn-885, and Asn-898 each carry an N-linked (GlcNAc...) asparagine glycan. 2 Fibronectin type-III domains span residues 483 to 603 (QTRT…TLPA) and 607 to 707 (VPQD…AQEV). A disulfide bond links Cys-657 and Cys-864. The Extracellular segment spans residues 747 to 921 (EAGLLRLGKN…LEEEDTGGMR (175 aa)). Residues 818–913 (IPGKVAWKAA…GVTFYITDLE (96 aa)) form the Fibronectin type-III 3 domain. Residues 922–943 (IFLTVTPVGFMLLVTLAALGFF) form a helical membrane-spanning segment. The Cytoplasmic segment spans residues 944–1300 (YSRKRNSTLY…YSAPNGGPGH (357 aa)). Residues 979 to 1254 (IAIIRELGQG…RIQDELRPSF (276 aa)) form the Protein kinase domain. Residues 985–993 (LGQGSFGMV) and Lys-1013 contribute to the ATP site. The Proton acceptor role is filled by Asp-1115. Phosphotyrosine; by autocatalysis occurs at positions 1145 and 1146. A disordered region spans residues 1273–1300 (LPTEAEPDSPPTLNGASDYSAPNGGPGH).

This sequence belongs to the protein kinase superfamily. Tyr protein kinase family. Insulin receptor subfamily. In terms of assembly, probable tetramer of 2 alpha and 2 beta chains linked by disulfide bonds. The alpha chains contribute to the formation of the ligand-binding domain, while the beta chains carry the kinase domain. In terms of processing, autophosphorylated on tyrosine residues between pH 7.9 and pH 10.5. Highly expressed in the islets as well as in pancreatic beta-cells.

It is found in the membrane. It catalyses the reaction L-tyrosyl-[protein] + ATP = O-phospho-L-tyrosyl-[protein] + ADP + H(+). Its function is as follows. Receptor with tyrosine-protein kinase activity. Functions as a pH sensing receptor which is activated by increased extracellular pH. Activates an intracellular signaling pathway that involves IRS1 and AKT1/PKB. This chain is Insulin receptor-related protein (Insrr), found in Mus musculus (Mouse).